Consider the following 498-residue polypeptide: Ribose import ATP-binding protein RbsA (498 aa).

2 consecutive ABC transporter domains span residues 2–237 (LALQ…VGRD) and 247–491 (VTPG…TGQQ). Residue 34 to 41 (GENGAGKS) participates in ATP binding.

The protein belongs to the ABC transporter superfamily. Ribose importer (TC 3.A.1.2.1) family. As to quaternary structure, the complex is composed of an ATP-binding protein (RbsA), two transmembrane proteins (RbsC) and a solute-binding protein (RbsB).

The protein localises to the cell membrane. The catalysed reaction is D-ribose(out) + ATP + H2O = D-ribose(in) + ADP + phosphate + H(+). Its function is as follows. Part of the ABC transporter complex RbsABC involved in ribose import. Responsible for energy coupling to the transport system. In Deinococcus geothermalis (strain DSM 11300 / CIP 105573 / AG-3a), this protein is Ribose import ATP-binding protein RbsA.